The sequence spans 266 residues: Glutamate racemase (266 aa).

Substrate is bound by residues 9–10 (DS) and 41–42 (YG). Catalysis depends on cysteine 73, which acts as the Proton donor/acceptor. 74–75 (NS) is a substrate binding site. The Proton donor/acceptor role is filled by cysteine 183. 184–185 (TH) contacts substrate.

It belongs to the aspartate/glutamate racemases family.

The enzyme catalyses L-glutamate = D-glutamate. Its pathway is cell wall biogenesis; peptidoglycan biosynthesis. Functionally, provides the (R)-glutamate required for cell wall biosynthesis. The polypeptide is Glutamate racemase (Shewanella loihica (strain ATCC BAA-1088 / PV-4)).